A 128-amino-acid chain; its full sequence is Large ribosomal subunit protein bL12 (128 aa).

Belongs to the bacterial ribosomal protein bL12 family. In terms of assembly, homodimer. Part of the ribosomal stalk of the 50S ribosomal subunit. Forms a multimeric L10(L12)X complex, where L10 forms an elongated spine to which 2 to 4 L12 dimers bind in a sequential fashion. Binds GTP-bound translation factors.

In terms of biological role, forms part of the ribosomal stalk which helps the ribosome interact with GTP-bound translation factors. Is thus essential for accurate translation. The polypeptide is Large ribosomal subunit protein bL12 (Thermosipho africanus (strain TCF52B)).